Consider the following 329-residue polypeptide: 36 kDa antigen (329 aa).

A helical transmembrane segment spans residues 11-31; it reads AILTGGGALLLGLIVLFYLAY.

This sequence belongs to the membrane fusion protein (MFP) (TC 8.A.1) family.

The protein resides in the membrane. The polypeptide is 36 kDa antigen (Helicobacter pylori (strain ATCC 700392 / 26695) (Campylobacter pylori)).